The chain runs to 151 residues: Large ribosomal subunit protein uL13 (151 aa).

It belongs to the universal ribosomal protein uL13 family. In terms of assembly, part of the 50S ribosomal subunit.

Functionally, this protein is one of the early assembly proteins of the 50S ribosomal subunit, although it is not seen to bind rRNA by itself. It is important during the early stages of 50S assembly. This is Large ribosomal subunit protein uL13 from Microchaete diplosiphon (Fremyella diplosiphon).